The sequence spans 388 residues: Chorismate synthase (388 aa).

Arg39 and Arg45 together coordinate NADP(+). FMN-binding positions include 130–132 (RSS), 251–252 (NA), Gly296, 311–315 (KPIPT), and Arg337.

The protein belongs to the chorismate synthase family. As to quaternary structure, homotetramer. FMNH2 serves as cofactor.

It carries out the reaction 5-O-(1-carboxyvinyl)-3-phosphoshikimate = chorismate + phosphate. It functions in the pathway metabolic intermediate biosynthesis; chorismate biosynthesis; chorismate from D-erythrose 4-phosphate and phosphoenolpyruvate: step 7/7. Catalyzes the anti-1,4-elimination of the C-3 phosphate and the C-6 proR hydrogen from 5-enolpyruvylshikimate-3-phosphate (EPSP) to yield chorismate, which is the branch point compound that serves as the starting substrate for the three terminal pathways of aromatic amino acid biosynthesis. This reaction introduces a second double bond into the aromatic ring system. This Streptococcus pyogenes serotype M1 protein is Chorismate synthase.